Reading from the N-terminus, the 130-residue chain is Small ribosomal subunit protein uS9 (130 aa).

This sequence belongs to the universal ribosomal protein uS9 family.

This chain is Small ribosomal subunit protein uS9, found in Agathobacter rectalis (strain ATCC 33656 / DSM 3377 / JCM 17463 / KCTC 5835 / VPI 0990) (Eubacterium rectale).